We begin with the raw amino-acid sequence, 234 residues long: 7-cyano-7-deazaguanine synthase (234 aa).

Residue Phe-8–Ala-18 participates in ATP binding. Positions 194, 202, 205, and 208 each coordinate Zn(2+).

This sequence belongs to the QueC family. Zn(2+) is required as a cofactor.

It carries out the reaction 7-carboxy-7-deazaguanine + NH4(+) + ATP = 7-cyano-7-deazaguanine + ADP + phosphate + H2O + H(+). Its pathway is purine metabolism; 7-cyano-7-deazaguanine biosynthesis. Functionally, catalyzes the ATP-dependent conversion of 7-carboxy-7-deazaguanine (CDG) to 7-cyano-7-deazaguanine (preQ(0)). The polypeptide is 7-cyano-7-deazaguanine synthase (Gloeobacter violaceus (strain ATCC 29082 / PCC 7421)).